Here is a 323-residue protein sequence, read N- to C-terminus: UPF0065 protein BP0148 (323 aa).

A signal peptide spans Met1–Ala24.

The protein belongs to the UPF0065 (bug) family.

The protein localises to the periplasm. The protein is UPF0065 protein BP0148 of Bordetella pertussis (strain Tohama I / ATCC BAA-589 / NCTC 13251).